We begin with the raw amino-acid sequence, 402 residues long: D-galactonate dehydratase family member RspA (402 aa).

Asn-37 and His-122 together coordinate substrate. The Proton donor/acceptor role is filled by Tyr-159. Asp-210 provides a ligand contact to Mg(2+). His-212 (proton donor/acceptor) is an active-site residue. Mg(2+) contacts are provided by Glu-236 and Glu-262. Substrate contacts are provided by Glu-262, Arg-283, His-312, Asp-316, and Glu-339.

This sequence belongs to the mandelate racemase/muconate lactonizing enzyme family. GalD subfamily. Mg(2+) serves as cofactor.

It carries out the reaction D-mannonate = 2-dehydro-3-deoxy-D-gluconate + H2O. In terms of biological role, has low D-mannonate dehydratase activity (in vitro), suggesting that this is not a physiological substrate and that it has no significant role in D-mannonate degradation in vivo. Has no detectable activity with a panel of 70 other acid sugars (in vitro). This is D-galactonate dehydratase family member RspA (rspA) from Cellvibrio japonicus (strain Ueda107) (Pseudomonas fluorescens subsp. cellulosa).